Reading from the N-terminus, the 455-residue chain is Aminopeptidase YwaD (455 aa).

Positions 1 to 31 (MKKLLTVMTMAVLTAGTLLLPAQSVTPAAHA) are cleaved as a signal peptide. Zn(2+)-binding residues include His250, Asp262, Glu295, Asp323, and His401.

This sequence belongs to the peptidase M28 family. M28B subfamily. In terms of assembly, monomer. It depends on Zn(2+) as a cofactor.

The protein resides in the secreted. The enzyme catalyses Release of N-terminal Arg and Lys from oligopeptides when P1' is not Pro. Also acts on arylamides of Arg and Lys.. It carries out the reaction Release of an N-terminal amino acid, preferentially leucine, but not glutamic or aspartic acids.. In terms of biological role, catalyzes the hydrolysis of a range of N-terminal amino acids. The polypeptide is Aminopeptidase YwaD (ywaD) (Bacillus subtilis (strain 168)).